We begin with the raw amino-acid sequence, 744 residues long: MAGRSMQAARCPTDELSLTNCAVVNEKDFQSGQHVIVRTSPNHRYTFTLKTHPSVVPGSIAFSLPQRKWAGLSIGQEIEVSLYTFDKAKQCIGTMTIEIDFLQKKSIDSNPYDTDKMAAEFIQQFNNQAFSVGQQLVFSFNEKLFGLLVKDIEAMDPSILKGEPATGKRQKIEVGLVVGNSQVAFEKAENSSLNLIGKAKTKENRQSIINPDWNFEKMGIGGLDKEFSDIFRRAFASRVFPPEIVEQMGCKHVKGILLYGPPGCGKTLLARQIGKMLNAREPKVVNGPEILNKYVGESEANIRKLFADAEEEQRRLGANSGLHIIIFDEIDAICKQRGSMAGSTGVHDTVVNQLLSKIDGVEQLNNILVIGMTNRPDLIDEALLRPGRLEVKMEIGLPDEKGRLQILHIHTARMRGHQLLSADVDIKELAMETKNFSGAELEGLVRAAQSTAMNRHIKASTKVEVDMEKAESLQVTRGDFLASLENDIKPAFGTNQEDYASYIMNGIIKWGDPVTRVLDDGELLVQQTKNSDRTPLVSVLLEGPPHSGKTALAAKIAEESNFPFIKICSPDKMIGFSETAKCQAMKKIFDDAYKSQLSCVVVDDIERLLDYVPIGPRFSNLVLQALLVLLKKAPPQGRKLLIIGTTSRKDVLQEMEMLNAFSTTIHVPNIATGEQLLEALELLGNFKDKERTTIAQQVKGKKVWIGIKKLLMLIEMSLQMDPEYRVRKFLALLREEGASPLDFD.

Residue Lys105 is modified to N6-acetyllysine. Ser207 carries the post-translational modification Phosphoserine. Tyr259 carries the phosphotyrosine modification. ATP contacts are provided by residues 505–510 and 545–552; these read NGIIKW and PHSGKTAL. Thr550 contributes to the Mg(2+) binding site. The residue at position 569 (Ser569) is a Phosphoserine; by CDK16.

The protein belongs to the AAA ATPase family. In terms of assembly, homohexamer. Interacts with GABARAP and GABARAPL2. Interacts with GRIA2. Interacts with PLK2, leading to disrupt the interaction with GRIA2. Interacts with MUSK; may regulate MUSK endocytosis and activity. Interacts with CDK16. Mg(2+) is required as a cofactor. Post-translationally, phosphorylation at Ser-569 interferes with homohexamerization.

The protein resides in the cytoplasm. It catalyses the reaction ATP + H2O = ADP + phosphate + H(+). In terms of biological role, required for vesicle-mediated transport. Catalyzes the fusion of transport vesicles within the Golgi cisternae. Is also required for transport from the endoplasmic reticulum to the Golgi stack. Seems to function as a fusion protein required for the delivery of cargo proteins to all compartments of the Golgi stack independent of vesicle origin. Interaction with AMPAR subunit GRIA2 leads to influence GRIA2 membrane cycling. The polypeptide is Vesicle-fusing ATPase (NSF) (Pongo abelii (Sumatran orangutan)).